The following is a 188-amino-acid chain: Elongation factor P (188 aa).

Residue Lys-34 is modified to N6-(3,6-diaminohexanoyl)-5-hydroxylysine.

It belongs to the elongation factor P family. In terms of processing, may be beta-lysylated on the epsilon-amino group of Lys-34 by the combined action of EpmA and EpmB, and then hydroxylated on the C5 position of the same residue by EpmC (if this protein is present). Lysylation is critical for the stimulatory effect of EF-P on peptide-bond formation. The lysylation moiety may extend toward the peptidyltransferase center and stabilize the terminal 3-CCA end of the tRNA. Hydroxylation of the C5 position on Lys-34 may allow additional potential stabilizing hydrogen-bond interactions with the P-tRNA.

Its subcellular location is the cytoplasm. Its pathway is protein biosynthesis; polypeptide chain elongation. Involved in peptide bond synthesis. Alleviates ribosome stalling that occurs when 3 or more consecutive Pro residues or the sequence PPG is present in a protein, possibly by augmenting the peptidyl transferase activity of the ribosome. Modification of Lys-34 is required for alleviation. This chain is Elongation factor P, found in Xanthomonas axonopodis pv. citri (strain 306).